Reading from the N-terminus, the 188-residue chain is Small ribosomal subunit protein uS7 (188 aa).

It belongs to the universal ribosomal protein uS7 family. In terms of assembly, part of the 30S ribosomal subunit.

One of the primary rRNA binding proteins, it binds directly to 16S rRNA where it nucleates assembly of the head domain of the 30S subunit. Is located at the subunit interface close to the decoding center. The chain is Small ribosomal subunit protein uS7 from Methanococcus maripaludis (strain C7 / ATCC BAA-1331).